The chain runs to 316 residues: Transaldolase (316 aa).

Lysine 132 (schiff-base intermediate with substrate) is an active-site residue.

This sequence belongs to the transaldolase family. Type 1 subfamily. As to quaternary structure, homodimer.

The protein resides in the cytoplasm. The enzyme catalyses D-sedoheptulose 7-phosphate + D-glyceraldehyde 3-phosphate = D-erythrose 4-phosphate + beta-D-fructose 6-phosphate. It functions in the pathway carbohydrate degradation; pentose phosphate pathway; D-glyceraldehyde 3-phosphate and beta-D-fructose 6-phosphate from D-ribose 5-phosphate and D-xylulose 5-phosphate (non-oxidative stage): step 2/3. Its function is as follows. Transaldolase is important for the balance of metabolites in the pentose-phosphate pathway. This Aliivibrio salmonicida (strain LFI1238) (Vibrio salmonicida (strain LFI1238)) protein is Transaldolase.